A 788-amino-acid polypeptide reads, in one-letter code: Cadherin-10 (788 aa).

The N-terminal stretch at 1–22 (MTIYQFLRLFVLWACLPHFCCP) is a signal peptide. Residues 23 to 54 (ELTFRRTPGIQQMTAESRAPRSDGKILHRQKR) constitute a propeptide that is removed on maturation. Residues 23-613 (ELTFRRTPGI…LLPAGLSTGA (591 aa)) are Extracellular-facing. 5 Cadherin domains span residues 56-160 (WMWN…EPTF), 161-269 (PEEI…PPRF), 270-384 (PQNT…PPVF), 385-489 (SRSS…APQF), and 489-603 (FAVF…AEAL). A glycan (N-linked (GlcNAc...) asparagine) is linked at N256. 2 N-linked (GlcNAc...) asparagine glycosylation sites follow: N456 and N534. The helical transmembrane segment at 614 to 634 (LIAILLCIIILLVIVVLFAAL) threads the bilayer. The Cytoplasmic portion of the chain corresponds to 635–788 (KRQRKKEPLI…YGGGESDKDA (154 aa)). The residue at position 784 (S784) is a Phosphoserine.

The protein localises to the cell membrane. Cadherins are calcium-dependent cell adhesion proteins. They preferentially interact with themselves in a homophilic manner in connecting cells; cadherins may thus contribute to the sorting of heterogeneous cell types. The protein is Cadherin-10 (Cdh10) of Mus musculus (Mouse).